We begin with the raw amino-acid sequence, 210 residues long: Ion-translocating oxidoreductase complex subunit G (210 aa).

Residues 9–29 (SLVLALFAIAATALVTITYAL) form a helical membrane-spanning segment. Residue threonine 176 is modified to FMN phosphoryl threonine.

This sequence belongs to the RnfG family. In terms of assembly, the complex is composed of six subunits: RnfA, RnfB, RnfC, RnfD, RnfE and RnfG. FMN serves as cofactor.

The protein resides in the cell inner membrane. In terms of biological role, part of a membrane-bound complex that couples electron transfer with translocation of ions across the membrane. In Aliivibrio fischeri (strain MJ11) (Vibrio fischeri), this protein is Ion-translocating oxidoreductase complex subunit G.